The following is a 2839-amino-acid chain: PDZ domain-containing protein 2 (2839 aa).

Residues 85–182 (LSFGNIPVFG…LIMLRRFKHK (98 aa)) form the PDZ 1 domain. Positions 185 to 318 (STYNGNSSNS…RFSKGGKTDF (134 aa)) are disordered. Low complexity predominate over residues 189–202 (GNSSNSSEPGETPT). Residues 280–296 (HLERSEVDRGTEHRIPK) show a composition bias toward basic and acidic residues. Residues 334–419 (KMELLKESDG…MVQLVVASKE (86 aa)) form the PDZ 2 domain. Over residues 437–447 (TSSVEDVSSWT) the composition is skewed to polar residues. The segment at 437-501 (TSSVEDVSSW…PKQGSNKIKL (65 aa)) is disordered. Over residues 448-461 (DNEDQEADGEEDEG) the composition is skewed to acidic residues. Position 568 is a phosphoserine (serine 568). The 87-residue stretch at 586–672 (IIGLYKEKGK…GLFVLTVRTK (87 aa)) folds into the PDZ 3 domain. Over residues 678–697 (LTPCSTPTHMSRSASPNFNT) the composition is skewed to polar residues. The segment at 678-723 (LTPCSTPTHMSRSASPNFNTSGGASAGGSDEGSSSSLGRKTPGPKD) is disordered. The region spanning 728-813 (EVTLNKEPRV…GPVRLVIGRH (86 aa)) is the PDZ 4 domain. Polar residues-rich tracts occupy residues 832 to 843 (YQESKEANSSPG) and 894 to 908 (GCST…PSTS). 2 disordered regions span residues 832–852 (YQES…KSPS) and 879–921 (DFMV…ANSL). A phosphoserine mark is found at serine 944 and serine 948. Disordered regions lie at residues 984-1033 (SLPG…ISAP), 1062-1155 (SAEA…PCDL), 1216-1493 (KAAS…GAPA), 1530-1620 (FHED…LPTQ), 1638-1712 (PRES…SPLS), 1809-1865 (NQGT…DLSK), 1892-1976 (GKAK…SVSD), 2009-2079 (PDRG…GNIM), 2135-2166 (QVAE…SMAK), 2178-2211 (IRKA…GEDH), 2232-2251 (HFGR…DSQV), 2353-2383 (AKSG…GSLG), 2426-2481 (SRQN…SRSK), and 2516-2564 (ITPR…GEAA). The span at 1012 to 1022 (MDVHNQEERPR) shows a compositional bias: basic and acidic residues. 7 stretches are compositionally biased toward polar residues: residues 1092–1111 (RTDT…QQKS), 1138–1147 (SGSQTVNLTG), 1221–1236 (LGQQ…SDLI), 1250–1269 (SKTS…SQPA), 1305–1315 (TRSASETSTPH), 1384–1401 (SVSS…PSTD), and 1440–1453 (RSPS…GSQE). The segment covering 1662 to 1672 (SSQPSSLLEMS) has biased composition (low complexity). The segment covering 1698 to 1711 (EVTSASSAMENSPL) has biased composition (polar residues). Serine 1850 bears the Phosphoserine mark. Polar residues predominate over residues 1919–1931 (SPQTSHKTLSKAV). Residues 1936 to 1945 (HVADHEDPDR) show a composition bias toward basic and acidic residues. The segment covering 2139–2152 (SSTSHPSSLPSHAS) has biased composition (low complexity). Low complexity predominate over residues 2370 to 2383 (GRRSSGSIVSGSLG). Polar residues-rich tracts occupy residues 2426–2437 (SRQNPPETSSKG), 2470–2480 (RHTQPSPVSRS), and 2546–2559 (PKTS…SASD). Residues 2622–2706 (FIVLNRKEGS…HKDALVVIKK (85 aa)) form the PDZ 5 domain. Residues 2709 to 2729 (DQPRPSARQEPPTANGKGLLS) are disordered. Residues 2750 to 2835 (CVEVLKTSAG…GPVQLLIRKH (86 aa)) enclose the PDZ 6 domain.

As to quaternary structure, interacts with SCN10A, CTNND2 and PKP4. A secreted form is produced by caspase-mediated proteolytic cleavage. In terms of tissue distribution, isoform 2 is expressed (at protein level) in prostate and many prostate tumors.

Its subcellular location is the nucleus. It localises to the cytoplasm. The protein localises to the endoplasmic reticulum. The protein resides in the secreted. The polypeptide is PDZ domain-containing protein 2 (PDZD2) (Homo sapiens (Human)).